We begin with the raw amino-acid sequence, 320 residues long: Methionyl-tRNA formyltransferase (320 aa).

A (6S)-5,6,7,8-tetrahydrofolate-binding site is contributed by 114–117 (SLLP).

This sequence belongs to the Fmt family.

It catalyses the reaction L-methionyl-tRNA(fMet) + (6R)-10-formyltetrahydrofolate = N-formyl-L-methionyl-tRNA(fMet) + (6S)-5,6,7,8-tetrahydrofolate + H(+). Its function is as follows. Attaches a formyl group to the free amino group of methionyl-tRNA(fMet). The formyl group appears to play a dual role in the initiator identity of N-formylmethionyl-tRNA by promoting its recognition by IF2 and preventing the misappropriation of this tRNA by the elongation apparatus. The protein is Methionyl-tRNA formyltransferase of Acinetobacter baumannii (strain SDF).